Consider the following 553-residue polypeptide: Rhodopsin kinase GRK7 (553 aa).

Serine 36 carries the phosphoserine; by PKA modification. The RGS domain occupies 56–176 (FNSLCEQQPI…LVSPFYDKFL (121 aa)). The Protein kinase domain maps to 191–454 (FEEFRVLGKG…SDDPRKHHFF (264 aa)). Residues 197 to 205 (LGKGGFGEV) and lysine 220 contribute to the ATP site. Aspartate 316 serves as the catalytic Proton acceptor. The 66-residue stretch at 455–520 (KTINFPRLEA…GAVPIAWQEE (66 aa)) folds into the AGC-kinase C-terminal domain. At cysteine 550 the chain carries Cysteine methyl ester. Cysteine 550 is lipidated: S-geranylgeranyl cysteine. Positions 551 to 553 (LLL) are cleaved as a propeptide — removed in mature form.

The protein belongs to the protein kinase superfamily. AGC Ser/Thr protein kinase family. GPRK subfamily. As to quaternary structure, interacts (when prenylated) with PDE6D; this promotes release from membranes. Autophosphorylated in vitro at Ser-490. Phosphorylation at Ser-36 is regulated by light and activated by cAMP.

It localises to the membrane. It carries out the reaction L-threonyl-[rhodopsin] + ATP = O-phospho-L-threonyl-[rhodopsin] + ADP + H(+). The catalysed reaction is L-seryl-[rhodopsin] + ATP = O-phospho-L-seryl-[rhodopsin] + ADP + H(+). Its activity is regulated as follows. Inhibited by phosphorylation of Ser-36. Its function is as follows. Retina-specific kinase involved in the shutoff of the photoresponse and adaptation to changing light conditions via cone opsin phosphorylation, including rhodopsin (RHO). This is Rhodopsin kinase GRK7 (GRK7) from Sus scrofa (Pig).